Here is a 159-residue protein sequence, read N- to C-terminus: Ribosomal RNA large subunit methyltransferase H (159 aa).

Residues leucine 76, glycine 108, and 127 to 132 (FGKLTM) each bind S-adenosyl-L-methionine.

Belongs to the RNA methyltransferase RlmH family. As to quaternary structure, homodimer.

Its subcellular location is the cytoplasm. It carries out the reaction pseudouridine(1915) in 23S rRNA + S-adenosyl-L-methionine = N(3)-methylpseudouridine(1915) in 23S rRNA + S-adenosyl-L-homocysteine + H(+). Its function is as follows. Specifically methylates the pseudouridine at position 1915 (m3Psi1915) in 23S rRNA. The chain is Ribosomal RNA large subunit methyltransferase H from Lactobacillus delbrueckii subsp. bulgaricus (strain ATCC 11842 / DSM 20081 / BCRC 10696 / JCM 1002 / NBRC 13953 / NCIMB 11778 / NCTC 12712 / WDCM 00102 / Lb 14).